A 277-amino-acid polypeptide reads, in one-letter code: Digeranylgeranylglyceryl phosphate synthase (277 aa).

Helical transmembrane passes span 16–36 (ILAGIVGILGSLVAYEGIPPV), 40–60 (ILIFLVVYFGCSAGNTINDYF), 93–113 (FIGLIIALLLGWSAFLFALGA), 129–149 (FIGNVTVALLTAATPIYGAVG), 153–173 (IDLAGYLAICAFLVNVSREIM), 199–218 (SGIIASIFGFLTIISSFLPV), 222–244 (IGLGYLPIIIVDIMIAKASIDVL), and 253–273 (GQKILKFATFIAVISFLLGAL).

This sequence belongs to the UbiA prenyltransferase family. DGGGP synthase subfamily. Mg(2+) is required as a cofactor.

The protein resides in the cell membrane. The enzyme catalyses sn-3-O-(geranylgeranyl)glycerol 1-phosphate + (2E,6E,10E)-geranylgeranyl diphosphate = 2,3-bis-O-(geranylgeranyl)-sn-glycerol 1-phosphate + diphosphate. The protein operates within membrane lipid metabolism; glycerophospholipid metabolism. Its function is as follows. Prenyltransferase that catalyzes the transfer of the geranylgeranyl moiety of geranylgeranyl diphosphate (GGPP) to the C2 hydroxyl of (S)-3-O-geranylgeranylglyceryl phosphate (GGGP). This reaction is the second ether-bond-formation step in the biosynthesis of archaeal membrane lipids. This is Digeranylgeranylglyceryl phosphate synthase from Pyrococcus horikoshii (strain ATCC 700860 / DSM 12428 / JCM 9974 / NBRC 100139 / OT-3).